The following is a 238-amino-acid chain: tRNA1(Val) (adenine(37)-N6)-methyltransferase (238 aa).

Belongs to the methyltransferase superfamily. tRNA (adenine-N(6)-)-methyltransferase family.

It is found in the cytoplasm. It catalyses the reaction adenosine(37) in tRNA1(Val) + S-adenosyl-L-methionine = N(6)-methyladenosine(37) in tRNA1(Val) + S-adenosyl-L-homocysteine + H(+). Specifically methylates the adenine in position 37 of tRNA(1)(Val) (anticodon cmo5UAC). The protein is tRNA1(Val) (adenine(37)-N6)-methyltransferase of Shewanella sp. (strain W3-18-1).